Consider the following 165-residue polypeptide: Type II secretion system protein M (165 aa).

The Cytoplasmic portion of the chain corresponds to 1 to 22; the sequence is MKELLAPVQAWWRSVTPREQKM. A helical membrane pass occupies residues 23–43; it reads VMGMGALTVLAIAYWGIWQPL. Residues 44–165 lie on the Periplasmic side of the membrane; it reads SERTAQAQAR…VKRLQLKRGG (122 aa).

Belongs to the GSP M family. In terms of assembly, type II secretion system is composed of four main components: the outer membrane complex, the inner membrane complex, the cytoplasmic secretion ATPase and the periplasm-spanning pseudopilus. Forms homodimers. Interacts with EpsL/GspL. Interacts with EpsE/GspE. Interacts with EpsF/GspF.

Its subcellular location is the cell inner membrane. Functionally, inner membrane component of the type II secretion system required for the energy-dependent secretion of extracellular factors such as proteases and toxins from the periplasm. Plays a role in the complex assembly and recruits EpsL resulting in a stable complex in the inner membrane. Provides thus a link between the energy-providing EpsE protein in the cytoplasm and the rest of the T2SS machinery. This is Type II secretion system protein M (epsM) from Vibrio cholerae serotype O1 (strain ATCC 39315 / El Tor Inaba N16961).